The chain runs to 438 residues: Methyl-coenzyme M reductase subunit beta (438 aa).

Tyrosine 367 lines the coenzyme M pocket. Glycine 369 is a coenzyme B binding site.

This sequence belongs to the methyl-coenzyme M reductase beta subunit family. MCR is a hexamer of two alpha, two beta, and two gamma chains, forming a dimer of heterotrimers. Coenzyme F430 is required as a cofactor.

The protein localises to the cytoplasm. It carries out the reaction coenzyme B + methyl-coenzyme M = methane + coenzyme M-coenzyme B heterodisulfide. The protein operates within one-carbon metabolism; methyl-coenzyme M reduction; methane from methyl-coenzyme M: step 1/1. Functionally, component of the methyl-coenzyme M reductase (MCR) I that catalyzes the reductive cleavage of methyl-coenzyme M (CoM-S-CH3 or 2-(methylthio)ethanesulfonate) using coenzyme B (CoB or 7-mercaptoheptanoylthreonine phosphate) as reductant which results in the production of methane and the mixed heterodisulfide of CoB and CoM (CoM-S-S-CoB). This is the final step in methanogenesis. The chain is Methyl-coenzyme M reductase subunit beta (mcrB) from Methanothermus fervidus.